The chain runs to 217 residues: Large ribosomal subunit protein bL25 (217 aa).

Residues 178-217 (VVAPTEEPTEEEIEAMEGEQQTEEPEVVGESKEDEEKTEE) form a disordered region. Positions 184–205 (EPTEEEIEAMEGEQQTEEPEVV) are enriched in acidic residues. Residues 206–217 (GESKEDEEKTEE) are compositionally biased toward basic and acidic residues.

The protein belongs to the bacterial ribosomal protein bL25 family. CTC subfamily. As to quaternary structure, part of the 50S ribosomal subunit; part of the 5S rRNA/L5/L18/L25 subcomplex. Contacts the 5S rRNA. Binds to the 5S rRNA independently of L5 and L18.

Its function is as follows. This is one of the proteins that binds to the 5S RNA in the ribosome where it forms part of the central protuberance. This is Large ribosomal subunit protein bL25 from Staphylococcus aureus (strain USA300).